The sequence spans 529 residues: Alkaline phosphatase, germ cell type (529 aa).

A signal peptide spans 1–18 (MWGACLLLLGLSLQVCPS). Aspartate 60 provides a ligand contact to Mg(2+). Positions 60 and 110 each coordinate Zn(2+). Serine 110 functions as the Phosphoserine intermediate in the catalytic mechanism. Residues cysteine 139 and cysteine 201 are joined by a disulfide bond. An N-linked (GlcNAc...) asparagine glycan is attached at asparagine 140. Serine 173 provides a ligand contact to Mg(2+). Glutamate 234 contacts Ca(2+). Asparagine 267 and asparagine 277 each carry an N-linked (GlcNAc...) asparagine glycan. The Ca(2+) site is built by phenylalanine 287, glutamate 288, and aspartate 303. Glutamate 329 is a binding site for Mg(2+). Zn(2+)-binding residues include aspartate 334, histidine 338, aspartate 375, histidine 376, and histidine 450. Cysteine 485 and cysteine 492 are disulfide-bonded. Serine 502 is lipidated: GPI-anchor amidated serine. The propeptide at 503 to 529 (AVSPGYMSTLLCLLAGKMLMLMAAAEP) is removed in mature form.

This sequence belongs to the alkaline phosphatase family. In terms of assembly, homodimer. Requires Mg(2+) as cofactor. Zn(2+) serves as cofactor. It depends on Ca(2+) as a cofactor. In terms of tissue distribution, embryo and testis.

The protein resides in the cell membrane. The enzyme catalyses a phosphate monoester + H2O = an alcohol + phosphate. With respect to regulation, inhibited by L-leucine, EDTA and heat. Its function is as follows. Alkaline phosphatase that can hydrolyze various phosphate compounds. This chain is Alkaline phosphatase, germ cell type (Alpg), found in Mus musculus (Mouse).